The primary structure comprises 369 residues: Molybdenum import ATP-binding protein ModC 1 (369 aa).

The ABC transporter domain maps to 10–240 (KGYIEVAFNG…PALASRSEAA (231 aa)). Residue 42-49 (GPPGCGKT) coordinates ATP. The 71-residue stretch at 297 to 367 (ASSILNVFRA…ELCGKLGDDG (71 aa)) folds into the Mop domain.

The protein belongs to the ABC transporter superfamily. Molybdate importer (TC 3.A.1.8) family. In terms of assembly, the complex is composed of two ATP-binding proteins (ModC), two transmembrane proteins (ModB) and a solute-binding protein (ModA).

The protein localises to the cell inner membrane. The enzyme catalyses molybdate(out) + ATP + H2O = molybdate(in) + ADP + phosphate + H(+). Its function is as follows. Part of the ABC transporter complex ModABC involved in molybdenum import. Responsible for energy coupling to the transport system. The protein is Molybdenum import ATP-binding protein ModC 1 of Bradyrhizobium diazoefficiens (strain JCM 10833 / BCRC 13528 / IAM 13628 / NBRC 14792 / USDA 110).